Here is a 994-residue protein sequence, read N- to C-terminus: Transposase for transposon Tn2501 (994 aa).

This sequence belongs to the transposase 7 family.

In terms of biological role, required for transposition of transposon Tn2501. The polypeptide is Transposase for transposon Tn2501 (tnpA) (Escherichia coli).